The chain runs to 88 residues: Molybdopterin synthase sulfur carrier subunit (88 aa).

Gly-88 carries the 1-thioglycine; alternate modification. Position 88 is a glycyl adenylate; alternate (Gly-88).

The protein belongs to the MoaD family. MOCS2A subfamily. As to quaternary structure, heterotetramer; composed of 2 small (MOCS2A) and 2 large (MOCS2B) subunits. Post-translationally, C-terminal thiocarboxylation occurs in 2 steps, it is first acyl-adenylated (-COAMP) via the hesA/moeB/thiF part of MOCS3, then thiocarboxylated (-COSH) via the rhodanese domain of MOCS3. As to expression, widely expressed. Highest levels are found in heart and skeletal muscle. Lower levels are present in brain, kidney and pancreas. Very low levels are found in lung and peripheral blood leukocytes.

The protein resides in the cytoplasm. It is found in the cytosol. It functions in the pathway cofactor biosynthesis; molybdopterin biosynthesis. In terms of biological role, acts as a sulfur carrier required for molybdopterin biosynthesis. Component of the molybdopterin synthase complex that catalyzes the conversion of precursor Z into molybdopterin by mediating the incorporation of 2 sulfur atoms into precursor Z to generate a dithiolene group. In the complex, serves as sulfur donor by being thiocarboxylated (-COSH) at its C-terminus by MOCS3. After interaction with MOCS2B, the sulfur is then transferred to precursor Z to form molybdopterin. The protein is Molybdopterin synthase sulfur carrier subunit of Homo sapiens (Human).